A 373-amino-acid chain; its full sequence is SUN domain-containing protein 5 (373 aa).

Residues 1–103 (MPRTRNIGAL…LFCQKVMEKM (103 aa)) are Nuclear-facing. Residues 104–120 (GLLVLCVFGFWMFSMHL) traverse the membrane as a helical segment. Topologically, residues 121–373 (PSKVEVWQDD…PKDSHLEPLS (253 aa)) are perinuclear space. A coiled-coil region spans residues 136-180 (LQSLRMYQEKVRHHTGEIQDLRGSMNQLIAKLQKMEAISDEQKMA). Residues 204 to 362 (ASIDFEHTSA…YRVRVHGSVT (159 aa)) enclose the SUN domain.

As to quaternary structure, probable homotrimer. Interacts with DNAJB13. Post-translationally, highly glycosylated in the Golgi apparatus during spermiogenesis. In terms of tissue distribution, testis-specific, abundantly expressed in spermatocytes and round spermatids.

The protein resides in the nucleus inner membrane. The protein localises to the golgi apparatus. In terms of biological role, plays an essential role in anchoring sperm head to the tail. Is responsible for the attachment of the coupling apparatus to the sperm nuclear envelope. The chain is SUN domain-containing protein 5 (Sun5) from Mus musculus (Mouse).